The primary structure comprises 452 residues: Trigger factor (452 aa).

One can recognise a PPIase FKBP-type domain in the interval 170–256 (DSIVKVDFVE…IKSIKKRDLP (87 aa)).

Belongs to the FKBP-type PPIase family. Tig subfamily.

Its subcellular location is the cytoplasm. It catalyses the reaction [protein]-peptidylproline (omega=180) = [protein]-peptidylproline (omega=0). Involved in protein export. Acts as a chaperone by maintaining the newly synthesized protein in an open conformation. Functions as a peptidyl-prolyl cis-trans isomerase. This chain is Trigger factor, found in Borreliella afzelii (strain PKo) (Borrelia afzelii).